Here is a 374-residue protein sequence, read N- to C-terminus: WAT1-related protein At1g60050 (374 aa).

A run of 10 helical transmembrane segments spans residues 11–31, 42–62, 82–102, 107–127, 145–165, 194–214, 228–248, 255–275, 292–312, and 315–335; these read IVPFIVMALMEACTIALTILA, FVFIVYTNALGSLLLLPYSFY, IFLLGFTGVFLFQNMAFLGLS, IVVCAMGLQSPAFSFLLSLAL, IGTLICFTGAFVEVIYLGPFI, WALGSLLLACATLSISIWNII, VVSAYSLAGTLQCAIFSAFME, ELKLNMDLYLIIATGIFGSII, VPLFKPFGILWASIFGTSFFV, and LHYGSVLGAAIAGTGYLLIMW. An EamA domain is found at 26–155; the sequence is ALTILAKTAL…GTLICFTGAF (130 aa).

Belongs to the drug/metabolite transporter (DMT) superfamily. Plant drug/metabolite exporter (P-DME) (TC 2.A.7.4) family.

The protein localises to the membrane. This chain is WAT1-related protein At1g60050, found in Arabidopsis thaliana (Mouse-ear cress).